A 622-amino-acid chain; its full sequence is Cell pattern formation-associated protein stuA (622 aa).

Disordered stretches follow at residues 1 to 24 (MASM…QTYA) and 62 to 81 (YPNS…SISS). In terms of domain architecture, HTH APSES-type spans 129–235 (RVTATLWEDE…QHISNLLYHP (107 aa)). The segment at residues 163-184 (GTKLLNVAGMTRGRRDGILKSE) is a DNA-binding region (H-T-H motif). 2 disordered regions span residues 239-517 (NQRN…TPPR) and 549-622 (SNSG…SARR). 3 stretches are compositionally biased toward polar residues: residues 274–283 (LQTPVPSHMS), 302–345 (ASAS…ARSM), and 355–370 (GNNL…QSGY). The segment covering 384-395 (PQYAPQQPLPQQ) has biased composition (low complexity). Composition is skewed to polar residues over residues 404–421 (MPTS…QRGS), 455–470 (SGYN…TNPS), 480–506 (QLTP…NTAP), and 549–563 (SNSG…SMGS). The tract at residues 565-590 (KRMRDDDDDRIVPPDSRGEFDTKRRK) is nuclear localization domain. The span at 566–586 (RMRDDDDDRIVPPDSRGEFDT) shows a compositional bias: basic and acidic residues.

Belongs to the EFG1/PHD1/stuA family.

Its subcellular location is the nucleus. Its function is as follows. Transcription factor that regulates asexual reproduction. Binds the StuA-response elements (StRE) with the consensus sequence 5'-(A/T)CGCG(T/A)N(A/C)-3' at the promoters of target genes. Required from the very earliest events of asexual reproduction until completion of conidiophore development, but is not specifically required for differentiation of conidia. Represses transcription of the abaA developmental regulatory gene and of the developmentally regulated awh11 gene. Controls the expression of the catalase-peroxidase gene cpeA. Plays an important role in cell wall biogenesis during the development by controlling the transcription level of fksA. The sequence is that of Cell pattern formation-associated protein stuA from Emericella nidulans (strain FGSC A4 / ATCC 38163 / CBS 112.46 / NRRL 194 / M139) (Aspergillus nidulans).